The sequence spans 330 residues: UPF0324 membrane protein PG_2004 (330 aa).

The next 9 membrane-spanning stretches (helical) occupy residues 13–31 (IAYPAIIVFLILTLLGSLV), 36–58 (PFTSWLTPPVALLMGLAYALIFG), 71–93 (VLLQYSVVGLGFGMNLGESLASG), 97–114 (MMFTIISVFGTLLLGWFI), 126–148 (SALISAGTAICGGSAIAAVGPIL), 158–180 (ALGTVFLLNAVALFIFPSIGHWL), 248–270 (VPLFILFFIGAIILNTYLLEAYF), 285–307 (LTLSLFFIGASLTKEVIASVGVR), and 312–329 (GLFLWILISVGSLAFILL).

Belongs to the UPF0324 family.

Its subcellular location is the cell membrane. The polypeptide is UPF0324 membrane protein PG_2004 (Porphyromonas gingivalis (strain ATCC BAA-308 / W83)).